Here is a 484-residue protein sequence, read N- to C-terminus: ATP synthase subunit beta (484 aa).

G162 to T169 is an ATP binding site.

Belongs to the ATPase alpha/beta chains family. F-type ATPases have 2 components, CF(1) - the catalytic core - and CF(0) - the membrane proton channel. CF(1) has five subunits: alpha(3), beta(3), gamma(1), delta(1), epsilon(1). CF(0) has four main subunits: a(1), b(1), b'(1) and c(9-12).

Its subcellular location is the cellular thylakoid membrane. It carries out the reaction ATP + H2O + 4 H(+)(in) = ADP + phosphate + 5 H(+)(out). Produces ATP from ADP in the presence of a proton gradient across the membrane. The catalytic sites are hosted primarily by the beta subunits. The chain is ATP synthase subunit beta from Synechococcus elongatus (strain ATCC 33912 / PCC 7942 / FACHB-805) (Anacystis nidulans R2).